The following is a 426-amino-acid chain: Trigger factor 1 (426 aa).

The region spanning 163–248 is the PPIase FKBP-type domain; that stretch reads QDTVNIDFAG…VNKLKRKEYA (86 aa).

Belongs to the FKBP-type PPIase family. Tig subfamily.

Its subcellular location is the cytoplasm. The enzyme catalyses [protein]-peptidylproline (omega=180) = [protein]-peptidylproline (omega=0). Functionally, involved in protein export. Acts as a chaperone by maintaining the newly synthesized protein in an open conformation. Functions as a peptidyl-prolyl cis-trans isomerase. This is Trigger factor 1 from Desulfitobacterium hafniense (strain Y51).